Consider the following 538-residue polypeptide: DALR anticodon-binding domain-containing protein 3 (538 aa).

As to quaternary structure, part of a complex containing tRNA(Arg) and METTL2. Interacts with tRNA(Arg)(CCU) and tRNA(Arg)(UCU). Interacts with METTL2.

Involved in tRNA methylation. Facilitates the recognition and targeting of tRNA(Arg)(CCU) and tRNA(Arg)(UCU) substrates for N(3)-methylcytidine modification by METTL2. This Rattus norvegicus (Rat) protein is DALR anticodon-binding domain-containing protein 3 (Dalrd3).